The chain runs to 170 residues: MPRSQRNDNFIDKTFTVIADILLKVLPTSQREKQAFTYYRDGMSAQAEGEYAEALQNYYEAMRLEVDAYDRSYILYNIGLIHTSNGEHGRALEYYYQALERNPSLPSALNNIAVIYHYRGEQAIENGQSEISQILFEKAADYWKEAIRLAPTNYIEAQNWLKMTGRNTGL.

TPR repeat units lie at residues 35–68 (AFTYYRDGMSAQAEGEYAEALQNYYEAMRLEVDA), 72–105 (SYILYNIGLIHTSNGEHGRALEYYYQALERNPSL), and 120–153 (GEQAIENGQSEISQILFEKAADYWKEAIRLAPTN).

This sequence belongs to the Ycf3 family.

It is found in the plastid. Its subcellular location is the chloroplast thylakoid membrane. Functionally, essential for the assembly of the photosystem I (PSI) complex. May act as a chaperone-like factor to guide the assembly of the PSI subunits. The chain is Photosystem I assembly protein Ycf3 from Tetradesmus obliquus (Green alga).